A 106-amino-acid chain; its full sequence is uncharacterized protein (106 aa).

Residues 1 to 27 (MHHFVPSISLFMASVSFSVFFSHLATS) form the signal peptide. The chain crosses the membrane as a helical span at residues 42-62 (TLFSMVPLINSSFNLSVFLFF).

It localises to the membrane. This is an uncharacterized protein from Saccharomyces cerevisiae (strain ATCC 204508 / S288c) (Baker's yeast).